Here is a 107-residue protein sequence, read N- to C-terminus: Large ribosomal subunit protein uL24 (107 aa).

Belongs to the universal ribosomal protein uL24 family. As to quaternary structure, part of the 50S ribosomal subunit.

In terms of biological role, one of two assembly initiator proteins, it binds directly to the 5'-end of the 23S rRNA, where it nucleates assembly of the 50S subunit. One of the proteins that surrounds the polypeptide exit tunnel on the outside of the subunit. The polypeptide is Large ribosomal subunit protein uL24 (Neisseria gonorrhoeae (strain ATCC 700825 / FA 1090)).